A 284-amino-acid polypeptide reads, in one-letter code: NH(3)-dependent NAD(+) synthetase (284 aa).

51–58 contributes to the ATP binding site; that stretch reads GISGGIDS. Asp-57 contacts Mg(2+). Residue Arg-148 coordinates deamido-NAD(+). Thr-168 provides a ligand contact to ATP. Mg(2+) is bound at residue Glu-173. Deamido-NAD(+) is bound by residues Lys-181 and Asp-188. Lys-197 and Thr-219 together coordinate ATP. 268–269 is a binding site for deamido-NAD(+); the sequence is HK.

This sequence belongs to the NAD synthetase family. In terms of assembly, homodimer.

It carries out the reaction deamido-NAD(+) + NH4(+) + ATP = AMP + diphosphate + NAD(+) + H(+). Its pathway is cofactor biosynthesis; NAD(+) biosynthesis; NAD(+) from deamido-NAD(+) (ammonia route): step 1/1. Catalyzes the ATP-dependent amidation of deamido-NAD to form NAD. Uses ammonia as a nitrogen source. This Burkholderia mallei (strain NCTC 10247) protein is NH(3)-dependent NAD(+) synthetase.